A 287-amino-acid polypeptide reads, in one-letter code: Centromere protein P (287 aa).

Residues 1 to 37 (MDNSVYQVYEDEIQLLEEEIKLLSDKYEDIQQESTFF) are a coiled coil.

The protein belongs to the CENP-P/CTF19 family. In terms of assembly, component of the CENPA-HI complex, at least composed of CENPH, CENPI, CENPK, CENPL, CENPM, CENPO and CENPP.

The protein resides in the nucleus. Its subcellular location is the chromosome. It is found in the centromere. Its function is as follows. Component of the CENPA-HI complex, a centromeric complex involved in assembly of kinetochore proteins, mitotic progression and chromosome segregation. This Gallus gallus (Chicken) protein is Centromere protein P (CENPP).